Here is an 881-residue protein sequence, read N- to C-terminus: Formin-like protein 10 (881 aa).

The N-terminal stretch at 1 to 24 (MAMKRVVFLLLLVAASALVKSSRG) is a signal peptide. The disordered stretch occupies residues 194–223 (LTPSNSLNMEPPSPYYPSKSAHKHQGVAPP). A helical transmembrane segment spans residues 236 to 256 (VVLIAVLPTAALSFLAAFLCF). A compositionally biased stretch (polar residues) spans 333–346 (TLVTGGTQENNATS). Disordered stretches follow at residues 333–427 (TLVT…EVNA), 683–703 (ENGR…ESLQ), and 837–881 (ASQK…DSND). Over residues 351 to 390 (LMPPPPPPPPPPPPPPPPPPPRPPPPPPPIKKGAPPPAPP) the composition is skewed to pro residues. Positions 400–424 (LSPTESSRSEESSASELASESSETE) are enriched in low complexity. Residues 422-854 (ETEVNAPRAK…KSQANGNSNN (433 aa)) form the FH2 domain. Residues 692–701 (STSDDNSNES) are compositionally biased toward polar residues. Over residues 846 to 865 (SQANGNSNNPSSQSNPQEQQ) the composition is skewed to low complexity. Basic and acidic residues predominate over residues 870-881 (LDHHFDSSDSND).

Belongs to the formin-like family. Class-I subfamily.

It localises to the membrane. This Oryza sativa subsp. japonica (Rice) protein is Formin-like protein 10 (FH10).